The chain runs to 161 residues: Regulator of ribonuclease activity A (161 aa).

Belongs to the RraA family. Homotrimer. Binds to both RNA-binding sites in the C-terminal region of Rne and to RhlB.

It localises to the cytoplasm. Functionally, globally modulates RNA abundance by binding to RNase E (Rne) and regulating its endonucleolytic activity. Can modulate Rne action in a substrate-dependent manner by altering the composition of the degradosome. Modulates RNA-binding and helicase activities of the degradosome. The protein is Regulator of ribonuclease activity A of Shigella boydii serotype 18 (strain CDC 3083-94 / BS512).